The primary structure comprises 78 residues: Acyl carrier protein (78 aa).

Positions 2–77 (SDTADRVKKI…DAIKYIDENK (76 aa)) constitute a Carrier domain. S37 carries the post-translational modification O-(pantetheine 4'-phosphoryl)serine.

The protein belongs to the acyl carrier protein (ACP) family. 4'-phosphopantetheine is transferred from CoA to a specific serine of apo-ACP by AcpS. This modification is essential for activity because fatty acids are bound in thioester linkage to the sulfhydryl of the prosthetic group.

It is found in the cytoplasm. It functions in the pathway lipid metabolism; fatty acid biosynthesis. In terms of biological role, carrier of the growing fatty acid chain in fatty acid biosynthesis. This chain is Acyl carrier protein, found in Novosphingobium aromaticivorans (strain ATCC 700278 / DSM 12444 / CCUG 56034 / CIP 105152 / NBRC 16084 / F199).